We begin with the raw amino-acid sequence, 20 residues long: Pregnancy-associated glycoprotein 75 (20 aa).

Belongs to the peptidase A1 family. Post-translationally, N-glycosylated. In terms of tissue distribution, expressed in chorionic epithelium (trophectoderm).

The protein localises to the secreted. The chain is Pregnancy-associated glycoprotein 75 from Bubalus bubalis (Domestic water buffalo).